The sequence spans 157 residues: Probable calcium-binding protein CML15 (157 aa).

4 EF-hand domains span residues 3-38 (DQIR…LGLK), 39-74 (PSGD…DLNE), 78-113 (INSE…MGQP), and 114-149 (LTYK…SAVD). 17 residues coordinate Ca(2+): D16, D18, D20, S22, E27, D52, N54, N56, E63, D91, D93, N95, E102, D127, N129, D131, and E138.

Its function is as follows. Potential calcium sensor. The sequence is that of Probable calcium-binding protein CML15 (CML15) from Arabidopsis thaliana (Mouse-ear cress).